Consider the following 236-residue polypeptide: Phosphoribosylaminoimidazole-succinocarboxamide synthase (236 aa).

Belongs to the SAICAR synthetase family.

The enzyme catalyses 5-amino-1-(5-phospho-D-ribosyl)imidazole-4-carboxylate + L-aspartate + ATP = (2S)-2-[5-amino-1-(5-phospho-beta-D-ribosyl)imidazole-4-carboxamido]succinate + ADP + phosphate + 2 H(+). Its pathway is purine metabolism; IMP biosynthesis via de novo pathway; 5-amino-1-(5-phospho-D-ribosyl)imidazole-4-carboxamide from 5-amino-1-(5-phospho-D-ribosyl)imidazole-4-carboxylate: step 1/2. This chain is Phosphoribosylaminoimidazole-succinocarboxamide synthase, found in Pseudomonas syringae pv. syringae (strain B728a).